The sequence spans 370 residues: Chorismate synthase (370 aa).

The interval 41–60 is disordered; that stretch reads IQGDLDRRKPGTSRHVTQRK. NADP(+) contacts are provided by Arg-48 and Arg-54. FMN contacts are provided by residues 125–127, 238–239, Gly-278, 293–297, and Arg-319; these read RSS, NA, and KPTSS.

Belongs to the chorismate synthase family. As to quaternary structure, homotetramer. It depends on FMNH2 as a cofactor.

It catalyses the reaction 5-O-(1-carboxyvinyl)-3-phosphoshikimate = chorismate + phosphate. The protein operates within metabolic intermediate biosynthesis; chorismate biosynthesis; chorismate from D-erythrose 4-phosphate and phosphoenolpyruvate: step 7/7. Catalyzes the anti-1,4-elimination of the C-3 phosphate and the C-6 proR hydrogen from 5-enolpyruvylshikimate-3-phosphate (EPSP) to yield chorismate, which is the branch point compound that serves as the starting substrate for the three terminal pathways of aromatic amino acid biosynthesis. This reaction introduces a second double bond into the aromatic ring system. The polypeptide is Chorismate synthase (Cupriavidus pinatubonensis (strain JMP 134 / LMG 1197) (Cupriavidus necator (strain JMP 134))).